The following is a 235-amino-acid chain: Chaperone protein TorD (235 aa).

This sequence belongs to the TorD/DmsD family. TorD subfamily.

Its subcellular location is the cytoplasm. In terms of biological role, involved in the biogenesis of TorA. Acts on TorA before the insertion of the molybdenum cofactor and, as a result, probably favors a conformation of the apoenzyme that is competent for acquiring the cofactor. The polypeptide is Chaperone protein TorD (Shewanella amazonensis (strain ATCC BAA-1098 / SB2B)).